The primary structure comprises 354 residues: NADH-ubiquinone oxidoreductase chain 2 (354 aa).

10 consecutive transmembrane segments (helical) span residues 5–25, 26–46, 60–80, 96–116, 122–142, 149–169, 198–218, 242–262, 274–294, and 330–350; these read ILMVLIANVVLGTLIVLSSHH, WFTLWVGLEMNTLSILPILSY, FLVQSVSAGIVLNVVIIQAWL, FLMTLALGLKLGLFPCHYWFP, VGFIQGLVLSTWQKIAPFAVL, LNISLLASLGVLSVLVGGWGG, VSVACVMLVAYIIINSSVFFM, AGLVLSILSLGGLPPLFGFLI, GCFILAGVLVMGSLLSLFFYL, and VLLSVSFGISSLGLVCLPVFI.

It belongs to the complex I subunit 2 family.

It is found in the mitochondrion inner membrane. It catalyses the reaction a ubiquinone + NADH + 5 H(+)(in) = a ubiquinol + NAD(+) + 4 H(+)(out). Core subunit of the mitochondrial membrane respiratory chain NADH dehydrogenase (Complex I) that is believed to belong to the minimal assembly required for catalysis. Complex I functions in the transfer of electrons from NADH to the respiratory chain. The immediate electron acceptor for the enzyme is believed to be ubiquinone. This is NADH-ubiquinone oxidoreductase chain 2 (ND2) from Patiria pectinifera (Starfish).